Reading from the N-terminus, the 360-residue chain is Protein Wnt-2 (360 aa).

The N-terminal stretch at 1–25 is a signal peptide; sequence MNAPLGGIWLWLPLLLTWLTPEVNS. 11 cysteine pairs are disulfide-bonded: C76–C87, C127–C135, C137–C157, C206–C220, C208–C215, C278–C309, C294–C304, C308–C348, C324–C339, C326–C336, and C331–C332. S212 is lipidated: O-palmitoleoyl serine; by PORCN. N295 is a glycosylation site (N-linked (GlcNAc...) asparagine).

Belongs to the Wnt family. In terms of processing, palmitoleoylation is required for efficient binding to frizzled receptors. Depalmitoleoylation leads to Wnt signaling pathway inhibition.

It localises to the secreted. The protein resides in the extracellular space. The protein localises to the extracellular matrix. Functionally, ligand for members of the frizzled family of seven transmembrane receptors. Functions in the canonical Wnt signaling pathway that results in activation of transcription factors of the TCF/LEF family. Functions as a upstream regulator of FGF10 expression. Plays an important role in embryonic lung development. May contribute to embryonic brain development by regulating the proliferation of dopaminergic precursors and neurons. This is Protein Wnt-2 (WNT2) from Gorilla gorilla gorilla (Western lowland gorilla).